The sequence spans 308 residues: Putative gluconeogenesis factor (308 aa).

It belongs to the gluconeogenesis factor family.

Its subcellular location is the cytoplasm. Functionally, required for morphogenesis under gluconeogenic growth conditions. This is Putative gluconeogenesis factor from Pasteurella multocida (strain Pm70).